The chain runs to 250 residues: 3-deoxy-manno-octulosonate cytidylyltransferase (250 aa).

This sequence belongs to the KdsB family.

The protein resides in the cytoplasm. The catalysed reaction is 3-deoxy-alpha-D-manno-oct-2-ulosonate + CTP = CMP-3-deoxy-beta-D-manno-octulosonate + diphosphate. It functions in the pathway nucleotide-sugar biosynthesis; CMP-3-deoxy-D-manno-octulosonate biosynthesis; CMP-3-deoxy-D-manno-octulosonate from 3-deoxy-D-manno-octulosonate and CTP: step 1/1. It participates in bacterial outer membrane biogenesis; lipopolysaccharide biosynthesis. In terms of biological role, activates KDO (a required 8-carbon sugar) for incorporation into bacterial lipopolysaccharide in Gram-negative bacteria. In Rhodopirellula baltica (strain DSM 10527 / NCIMB 13988 / SH1), this protein is 3-deoxy-manno-octulosonate cytidylyltransferase.